The sequence spans 536 residues: Feruloyl esterase B (536 aa).

The signal sequence occupies residues 1-20; the sequence is MKTSIVLSIVALFLTSKASA. In terms of domain architecture, CBM10 spans 21 to 59; that stretch reads DCWSERLGWPCCSDSNAEVIYVDDDGDWGVENNDWCGIQ. The interval 22–59 is cellulose-binding; the sequence is CWSERLGWPCCSDSNAEVIYVDDDGDWGVENNDWCGIQ. Asn-65 carries an N-linked (GlcNAc...) asparagine glycan. Repeat copies occupy residues 78–90, 91–103, 104–116, 117–129, 134–146, 151–163, 164–176, 181–193, 194–206, 211–223, 224–236, and 237–249. Residues 78-249 form a 12 X 13 AA repeats of N-Q-G-G-G-M-[PQ]-W-G-D-F-G-G region; the sequence is NQGGGMPWGD…GGMQWGDFGG (172 aa). Positions 203–252 are enriched in gly residues; sequence DFGGNQGGNQGGGMPWGDFGGNQGGGMQWGDFGGNQGGGMQWGDFGGNQG. Residues 203–273 form a disordered region; it reads DFGGNQGGNQ…SGPTVEYSTD (71 aa). The catalytic stretch occupies residues 257-536; the sequence is WGNQGGNSGP…WDFVKQFSLP (280 aa).

Component of the multienzyme cellulase-hemicellulase complex.

The protein localises to the secreted. It catalyses the reaction feruloyl-polysaccharide + H2O = ferulate + polysaccharide.. Its activity is regulated as follows. Inhibited by the specific serine esterase inhibitor AEBSF. Functionally, involved in degradation of plant cell walls. Hydrolyzes of the feruloyl-arabinose ester bond in arabinoxylans as well as the feruloyl-galactose and feruloyl-arabinose ester bonds in pectin. In Piromyces equi, this protein is Feruloyl esterase B (ESTA).